A 173-amino-acid polypeptide reads, in one-letter code: Alpha-crystallin A chain (173 aa).

Met1 is subject to N-acetylmethionine. The segment at 1-63 (MDIAIQQPWF…RTVLDSGVSE (63 aa)) is required for complex formation with BFSP1 and BFSP2. At Gln6 the chain carries Deamidated glutamine; partial. Position 45 is a phosphoserine (Ser45). Gln50 bears the Deamidated glutamine; partial mark. One can recognise a sHSP domain in the interval 52 to 162 (LFRTVLDSGV…GHSERAIPVS (111 aa)). N6-acetyllysine occurs at positions 70 and 99. Residue His100 participates in Zn(2+) binding. Asn101 is modified (deamidated asparagine; partial). Zn(2+) contacts are provided by Glu102 and His107. Phosphoserine is present on Ser122. Deamidated asparagine; partial is present on Asn123. Residues 144–173 (PKVPSGVDAGHSERAIPVSREEKPSSAPSS) form a disordered region. Residues 153-167 (GHSERAIPVSREEKP) show a composition bias toward basic and acidic residues. His154 contacts Zn(2+). Residue Ser162 is glycosylated (O-linked (GlcNAc) serine).

It belongs to the small heat shock protein (HSP20) family. As to quaternary structure, heteromer composed of three CRYAA and one CRYAB subunits. Inter-subunit bridging via zinc ions enhances stability, which is crucial as there is no protein turn over in the lens. Can also form homodimers and homotetramers (dimers of dimers) which serve as the building blocks of homooligomers. Within homooligomers, the zinc-binding motif is created from residues of 3 different molecules. His-100 and Glu-102 from one molecule are ligands of the zinc ion, and His-107 and His-154 residues from additional molecules complete the site with tetrahedral coordination geometry. Part of a complex required for lens intermediate filament formation composed of BFSP1, BFSP2 and CRYAA. Post-translationally, acetylation at Lys-70 may increase chaperone activity. Undergoes age-dependent proteolytical cleavage at the C-terminus.

Its subcellular location is the cytoplasm. It localises to the nucleus. Its function is as follows. Contributes to the transparency and refractive index of the lens. Acts as a chaperone, preventing aggregation of various proteins under a wide range of stress conditions. Required for the correct formation of lens intermediate filaments as part of a complex composed of BFSP1, BFSP2 and CRYAA. This Neovison vison (American mink) protein is Alpha-crystallin A chain (CRYAA).